A 254-amino-acid polypeptide reads, in one-letter code: Pyridoxine 5'-phosphate synthase (254 aa).

Residue asparagine 12 participates in 3-amino-2-oxopropyl phosphate binding. 14–15 contacts 1-deoxy-D-xylulose 5-phosphate; that stretch reads DH. Arginine 23 lines the 3-amino-2-oxopropyl phosphate pocket. Histidine 48 acts as the Proton acceptor in catalysis. 1-deoxy-D-xylulose 5-phosphate is bound by residues arginine 50 and histidine 55. Glutamate 75 serves as the catalytic Proton acceptor. Threonine 105 is a 1-deoxy-D-xylulose 5-phosphate binding site. The active-site Proton donor is the histidine 199. 3-amino-2-oxopropyl phosphate-binding positions include glycine 200 and 221–222; that span reads GF.

It belongs to the PNP synthase family. As to quaternary structure, homooctamer; tetramer of dimers.

It localises to the cytoplasm. It catalyses the reaction 3-amino-2-oxopropyl phosphate + 1-deoxy-D-xylulose 5-phosphate = pyridoxine 5'-phosphate + phosphate + 2 H2O + H(+). It functions in the pathway cofactor biosynthesis; pyridoxine 5'-phosphate biosynthesis; pyridoxine 5'-phosphate from D-erythrose 4-phosphate: step 5/5. Functionally, catalyzes the complicated ring closure reaction between the two acyclic compounds 1-deoxy-D-xylulose-5-phosphate (DXP) and 3-amino-2-oxopropyl phosphate (1-amino-acetone-3-phosphate or AAP) to form pyridoxine 5'-phosphate (PNP) and inorganic phosphate. The sequence is that of Pyridoxine 5'-phosphate synthase from Rhodopseudomonas palustris (strain HaA2).